A 123-amino-acid chain; its full sequence is Large ribosomal subunit protein bL12 (123 aa).

This sequence belongs to the bacterial ribosomal protein bL12 family. In terms of assembly, homodimer. Part of the ribosomal stalk of the 50S ribosomal subunit. Forms a multimeric L10(L12)X complex, where L10 forms an elongated spine to which 2 to 4 L12 dimers bind in a sequential fashion. Binds GTP-bound translation factors.

In terms of biological role, forms part of the ribosomal stalk which helps the ribosome interact with GTP-bound translation factors. Is thus essential for accurate translation. In Dehalococcoides mccartyi (strain ATCC BAA-2100 / JCM 16839 / KCTC 5957 / BAV1), this protein is Large ribosomal subunit protein bL12.